The primary structure comprises 171 residues: S-ribosylhomocysteine lyase (171 aa).

3 residues coordinate Fe cation: His54, His58, and Cys128.

Belongs to the LuxS family. Homodimer. Fe cation serves as cofactor.

It carries out the reaction S-(5-deoxy-D-ribos-5-yl)-L-homocysteine = (S)-4,5-dihydroxypentane-2,3-dione + L-homocysteine. In terms of biological role, involved in the synthesis of autoinducer 2 (AI-2) which is secreted by bacteria and is used to communicate both the cell density and the metabolic potential of the environment. The regulation of gene expression in response to changes in cell density is called quorum sensing. Catalyzes the transformation of S-ribosylhomocysteine (RHC) to homocysteine (HC) and 4,5-dihydroxy-2,3-pentadione (DPD). The polypeptide is S-ribosylhomocysteine lyase (Escherichia coli O81 (strain ED1a)).